The primary structure comprises 309 residues: Calcium homeostasis modulator protein 5 (309 aa).

Over 1–15 (MDAFQSILKFFLNQK) the chain is Cytoplasmic. Residues 16-37 (TAIGYSFMALLTVGSERLFSLV) form a helical membrane-spanning segment. The a 1,2-diacyl-sn-glycero-3-phosphate site is built by R32 and V37. Residues 38–45 (AFKCPCSV) are Extracellular-facing. 3 disulfide bridges follow: C41–C127, C43–C158, and C142–C149. The helical transmembrane segment at 46-70 (ENTAYGLVFLFAPAWVLLILGFFLN) threads the bilayer. Residues 71 to 99 (NKAWRLFTGCCMNPKKIFPRRRCCRFFYV) lie on the Cytoplasmic side of the membrane. The chain crosses the membrane as a helical span at residues 100 to 129 (LGHIILSSLVAPVMWLSVALLNGTFYECAM). An a 1,2-diacyl-sn-glycero-3-phosphate-binding site is contributed by N121. Residues 130-174 (SGTRSTRLLEMICKGKPKECWEELHKVSCGKSSMAAMESEEVRLS) are Extracellular-facing. The helical transmembrane segment at 175 to 200 (LQAQSQILGWCLICSASFLSLLTTCY) threads the bilayer. The Cytoplasmic portion of the chain corresponds to 201 to 309 (ARCRSKVSYL…MILVGTAQSL (109 aa)). R202 is a binding site for a 1,2-diacyl-sn-glycero-3-phosphate.

It belongs to the CALHM family. As to quaternary structure, oligomerizes to form undecameric cone-shaped channels.

It localises to the membrane. May assemble to form large pore channels with gating and ion conductance likely regulated by membrane lipids. The chain is Calcium homeostasis modulator protein 5 from Mus musculus (Mouse).